A 173-amino-acid polypeptide reads, in one-letter code: Large ribosomal subunit protein uL10 (173 aa).

The protein belongs to the universal ribosomal protein uL10 family. As to quaternary structure, part of the ribosomal stalk of the 50S ribosomal subunit. The N-terminus interacts with L11 and the large rRNA to form the base of the stalk. The C-terminus forms an elongated spine to which L12 dimers bind in a sequential fashion forming a multimeric L10(L12)X complex.

Its function is as follows. Forms part of the ribosomal stalk, playing a central role in the interaction of the ribosome with GTP-bound translation factors. In Acidithiobacillus ferrooxidans (strain ATCC 23270 / DSM 14882 / CIP 104768 / NCIMB 8455) (Ferrobacillus ferrooxidans (strain ATCC 23270)), this protein is Large ribosomal subunit protein uL10.